Consider the following 290-residue polypeptide: ATP synthase gamma chain (290 aa).

The protein belongs to the ATPase gamma chain family. F-type ATPases have 2 components, CF(1) - the catalytic core - and CF(0) - the membrane proton channel. CF(1) has five subunits: alpha(3), beta(3), gamma(1), delta(1), epsilon(1). CF(0) has three main subunits: a, b and c.

Its subcellular location is the cell membrane. In terms of biological role, produces ATP from ADP in the presence of a proton gradient across the membrane. The gamma chain is believed to be important in regulating ATPase activity and the flow of protons through the CF(0) complex. In Wolbachia pipientis subsp. Culex pipiens (strain wPip), this protein is ATP synthase gamma chain.